We begin with the raw amino-acid sequence, 220 residues long: MQHQLVVKRLGRQDYEPVWKAMHEFTDQRTDDTPDEVWLVEHNPVFTQGQAGKAEHLINTGDIPVVQSDRGGQVTYHGPGQLVAYFLINLRRKKLGVRDLVTHIENLVINTLKAYNIDSAARPDAPGVYVDGKKICSLGLRIRKGCSFHGLALNVNMDLGPFLRINPCGYEGMEMVQVSQVGGPEDIEAVEKQLIQELVTLLDYEQVEFSTEAPSQGNKA.

A BPL/LPL catalytic domain is found at 31-206; it reads DDTPDEVWLV…ELVTLLDYEQ (176 aa). Substrate is bound by residues 70–77, 137–139, and 150–152; these read RGGQVTYH, SLG, and GLA. Catalysis depends on C168, which acts as the Acyl-thioester intermediate.

The protein belongs to the LipB family.

It is found in the cytoplasm. It catalyses the reaction octanoyl-[ACP] + L-lysyl-[protein] = N(6)-octanoyl-L-lysyl-[protein] + holo-[ACP] + H(+). It participates in protein modification; protein lipoylation via endogenous pathway; protein N(6)-(lipoyl)lysine from octanoyl-[acyl-carrier-protein]: step 1/2. Functionally, catalyzes the transfer of endogenously produced octanoic acid from octanoyl-acyl-carrier-protein onto the lipoyl domains of lipoate-dependent enzymes. Lipoyl-ACP can also act as a substrate although octanoyl-ACP is likely to be the physiological substrate. The protein is Octanoyltransferase of Vibrio campbellii (strain ATCC BAA-1116).